We begin with the raw amino-acid sequence, 353 residues long: Photosystem II protein D1 (353 aa).

T2 carries the post-translational modification N-acetylthreonine. Residue T2 is modified to Phosphothreonine. 3 consecutive transmembrane segments (helical) span residues 29–46 (YIGW…TATS), 118–133 (HFLL…EWEL), and 142–156 (WIAV…AATA). Chlorophyll a is bound at residue H118. Y126 is a pheophytin a binding site. [CaMn4O5] cluster-binding residues include D170 and E189. The chain crosses the membrane as a helical span at residues 197-218 (FHMLGVAGVFGGSLFSAMHGSL). H198 serves as a coordination point for chlorophyll a. A quinone is bound by residues H215 and 264–265 (SF). H215 is a binding site for Fe cation. H272 is a binding site for Fe cation. A helical transmembrane segment spans residues 274–288 (FLAAWPVVGIWFTAL). Residues H332, E333, D342, and A344 each coordinate [CaMn4O5] cluster. The propeptide occupies 345–353 (AVEVPSING).

This sequence belongs to the reaction center PufL/M/PsbA/D family. In terms of assembly, PSII is composed of 1 copy each of membrane proteins PsbA, PsbB, PsbC, PsbD, PsbE, PsbF, PsbH, PsbI, PsbJ, PsbK, PsbL, PsbM, PsbT, PsbX, PsbY, PsbZ, Psb30/Ycf12, at least 3 peripheral proteins of the oxygen-evolving complex and a large number of cofactors. It forms dimeric complexes. The D1/D2 heterodimer binds P680, chlorophylls that are the primary electron donor of PSII, and subsequent electron acceptors. It shares a non-heme iron and each subunit binds pheophytin, quinone, additional chlorophylls, carotenoids and lipids. D1 provides most of the ligands for the Mn4-Ca-O5 cluster of the oxygen-evolving complex (OEC). There is also a Cl(-1) ion associated with D1 and D2, which is required for oxygen evolution. The PSII complex binds additional chlorophylls, carotenoids and specific lipids. is required as a cofactor. Post-translationally, tyr-161 forms a radical intermediate that is referred to as redox-active TyrZ, YZ or Y-Z. In terms of processing, C-terminally processed by CTPA; processing is essential to allow assembly of the oxygen-evolving complex and thus photosynthetic growth.

It is found in the plastid. Its subcellular location is the chloroplast thylakoid membrane. The enzyme catalyses 2 a plastoquinone + 4 hnu + 2 H2O = 2 a plastoquinol + O2. In terms of biological role, photosystem II (PSII) is a light-driven water:plastoquinone oxidoreductase that uses light energy to abstract electrons from H(2)O, generating O(2) and a proton gradient subsequently used for ATP formation. It consists of a core antenna complex that captures photons, and an electron transfer chain that converts photonic excitation into a charge separation. The D1/D2 (PsbA/PsbD) reaction center heterodimer binds P680, the primary electron donor of PSII as well as several subsequent electron acceptors. This is Photosystem II protein D1 from Triticum aestivum (Wheat).